Reading from the N-terminus, the 176-residue chain is Translation initiation factor IF-3 (176 aa).

This sequence belongs to the IF-3 family. In terms of assembly, monomer.

It is found in the cytoplasm. Its function is as follows. IF-3 binds to the 30S ribosomal subunit and shifts the equilibrium between 70S ribosomes and their 50S and 30S subunits in favor of the free subunits, thus enhancing the availability of 30S subunits on which protein synthesis initiation begins. The protein is Translation initiation factor IF-3 of Streptococcus pyogenes serotype M18 (strain MGAS8232).